A 55-amino-acid chain; its full sequence is MAKGIREKIRLNSSAGTGHFYTTTKNKRTMPEKMEIKKFDPVVRQHVIYKEGKIK.

The protein belongs to the bacterial ribosomal protein bL33 family.

The polypeptide is Large ribosomal subunit protein bL33 (Aeromonas hydrophila subsp. hydrophila (strain ATCC 7966 / DSM 30187 / BCRC 13018 / CCUG 14551 / JCM 1027 / KCTC 2358 / NCIMB 9240 / NCTC 8049)).